A 255-amino-acid chain; its full sequence is MPTDIFSFKRFDIDQTGCAMRVGTDGVLLGAWAGEDPAGSIPQHCLDIGTGTGLIALMLAQRFPQARVQGIEIDPIAAECARANAAASPFSDRIVIASGDILDSSLESLIGNQRFDLIVSNPPFFKSSLHAPDRQRTMARHEETLPLEKLICRASELLSPQGRLALITPRDRLKDLRLYAATYRLVSSRLTEVRTLPHKEPKRILSEWRPADTAIDRSPFTDTLIIHPATGYYSPEYVRLTEPFYTTSFRILAVG.

Belongs to the methyltransferase superfamily. tRNA (adenine-N(6)-)-methyltransferase family.

The protein localises to the cytoplasm. The enzyme catalyses adenosine(37) in tRNA1(Val) + S-adenosyl-L-methionine = N(6)-methyladenosine(37) in tRNA1(Val) + S-adenosyl-L-homocysteine + H(+). In terms of biological role, specifically methylates the adenine in position 37 of tRNA(1)(Val) (anticodon cmo5UAC). This Porphyromonas gingivalis (strain ATCC 33277 / DSM 20709 / CIP 103683 / JCM 12257 / NCTC 11834 / 2561) protein is tRNA1(Val) (adenine(37)-N6)-methyltransferase.